The sequence spans 474 residues: MAHFNQNFINSIKQDLPSHLCMEDFISYSSKPLRPSIRVNTLKISSKNFIKLMTPKGWHFDPIPWCENGYWIKLDQEVQLGNTIEHLQGLFYIQEASSMLPPTALLSVEQHDAQQYVLDMASAPGSKTTQIAALMGNKGLLVANEYSASRVKVLHANIARMGVANCALTHFDARVFGEYMFEIFDSVLLDAPCSGEGTIRKDPDALKNWDNNDVKGIVDTQKALIDSAFQSLKAGGELVYSTCALSRQENQNVCDYLKQRYPDAVEFINLSSLFPGADKSCTEEGFLHVWPQIYDSEGFFVAKIKKVSSIERVLPEPKKQKNFPFEKASAKKIAEIVEYLKTSFGIVLPSENGIYVRDAEVWLFPEDFHKLIGKMRFQRIGMKLADVLKKGFKVKHEAVLALTSPNTIELTDDEAQVFLMGRDITLSEKVKPQGETIVSYAGVSLGVVKHLGNKLKNNLPRDLVKDKIARYEQS.

Residues 121-127 (ASAPGSK), E145, D172, and D190 contribute to the S-adenosyl-L-methionine site. Residue C243 is the Nucleophile of the active site.

The protein belongs to the class I-like SAM-binding methyltransferase superfamily. RsmB/NOP family.

It is found in the cytoplasm. It carries out the reaction cytidine(1407) in 16S rRNA + S-adenosyl-L-methionine = 5-methylcytidine(1407) in 16S rRNA + S-adenosyl-L-homocysteine + H(+). Functionally, specifically methylates the cytosine at position 1407 (m5C1407) of 16S rRNA. The protein is Ribosomal RNA small subunit methyltransferase F of Shewanella piezotolerans (strain WP3 / JCM 13877).